Reading from the N-terminus, the 147-residue chain is Putative pre-16S rRNA nuclease (147 aa).

It belongs to the YqgF nuclease family.

The protein resides in the cytoplasm. Could be a nuclease involved in processing of the 5'-end of pre-16S rRNA. This is Putative pre-16S rRNA nuclease from Latilactobacillus sakei subsp. sakei (strain 23K) (Lactobacillus sakei subsp. sakei).